A 319-amino-acid chain; its full sequence is tRNA-cytidine(32) 2-sulfurtransferase (319 aa).

Residues 49–54 (SGGKDS) carry the PP-loop motif motif. The [4Fe-4S] cluster site is built by Cys124, Cys127, and Cys215. A disordered region spans residues 276-319 (DGDTAFDKEEFRDPAPDADDVEDAPKKRTISILDSRGKESGCGA). Composition is skewed to basic and acidic residues over residues 280–290 (AFDKEEFRDPA) and 310–319 (SRGKESGCGA).

The protein belongs to the TtcA family. As to quaternary structure, homodimer. The cofactor is Mg(2+). Requires [4Fe-4S] cluster as cofactor.

Its subcellular location is the cytoplasm. It catalyses the reaction cytidine(32) in tRNA + S-sulfanyl-L-cysteinyl-[cysteine desulfurase] + AH2 + ATP = 2-thiocytidine(32) in tRNA + L-cysteinyl-[cysteine desulfurase] + A + AMP + diphosphate + H(+). The protein operates within tRNA modification. Catalyzes the ATP-dependent 2-thiolation of cytidine in position 32 of tRNA, to form 2-thiocytidine (s(2)C32). The sulfur atoms are provided by the cysteine/cysteine desulfurase (IscS) system. This Chromobacterium violaceum (strain ATCC 12472 / DSM 30191 / JCM 1249 / CCUG 213 / NBRC 12614 / NCIMB 9131 / NCTC 9757 / MK) protein is tRNA-cytidine(32) 2-sulfurtransferase.